We begin with the raw amino-acid sequence, 484 residues long: Threonine synthase-like 2 (484 aa).

K113 carries the N6-(pyridoxal phosphate)lysine modification.

This sequence belongs to the threonine synthase family. It depends on pyridoxal 5'-phosphate as a cofactor.

Functionally, acts as a catabolic phospho-lyase on both gamma- and beta-phosphorylated substrates. Degrades O-phospho-threonine (PThr) to alpha-ketobutyrate, ammonia and phosphate. This is Threonine synthase-like 2 (THNSL2) from Pongo abelii (Sumatran orangutan).